The chain runs to 157 residues: Transcription elongation factor GreA (157 aa).

Belongs to the GreA/GreB family.

In terms of biological role, necessary for efficient RNA polymerase transcription elongation past template-encoded arresting sites. The arresting sites in DNA have the property of trapping a certain fraction of elongating RNA polymerases that pass through, resulting in locked ternary complexes. Cleavage of the nascent transcript by cleavage factors such as GreA or GreB allows the resumption of elongation from the new 3'terminus. GreA releases sequences of 2 to 3 nucleotides. This chain is Transcription elongation factor GreA, found in Chelativorans sp. (strain BNC1).